A 582-amino-acid polypeptide reads, in one-letter code: SUMO-activating enzyme subunit uba-2 (582 aa).

Residues 20 to 25, Asp44, 52 to 55, Lys68, 91 to 92, and 113 to 118 contribute to the ATP site; these read GAGGIG, NLNR, SI, and DNRAAR. Residues Cys154 and Cys157 each coordinate Zn(2+). Cys170 acts as the Glycyl thioester intermediate in catalysis. Residues 204 to 214 show a composition bias toward acidic residues; the sequence is SPDMDAVDPDN. The interval 204–235 is disordered; that stretch reads SPDMDAVDPDNTEAVTTEKEKEAMKEEPAPVG. The span at 219-231 shows a compositional bias: basic and acidic residues; that stretch reads TTEKEKEAMKEEP. Residues Cys431 and Cys434 each contribute to the Zn(2+) site. A compositionally biased stretch (basic and acidic residues) spans 531–570; it reads FEVARSEKEPEPDDRKRKADGSEEPEAKRQKVEEKDDKNG. Residues 531–582 are disordered; the sequence is FEVARSEKEPEPDDRKRKADGSEEPEAKRQKVEEKDDKNGNEAVAEITETMA.

Belongs to the ubiquitin-activating E1 family. As to quaternary structure, heterodimer with aos-1.

The protein operates within protein modification; protein sumoylation. In terms of biological role, the dimeric enzyme acts as an E1 ligase for smo-1. It mediates ATP-dependent activation of smo-1 and formation of a thioester with a conserved cysteine residue on uba-2. This is SUMO-activating enzyme subunit uba-2 (uba-2) from Caenorhabditis elegans.